The sequence spans 452 residues: Probable mannose-6-phosphate isomerase (452 aa).

Zn(2+) is bound by residues Gln-141, His-143, Glu-168, and His-295. Residue Arg-314 is part of the active site.

This sequence belongs to the mannose-6-phosphate isomerase type 1 family. Zn(2+) serves as cofactor.

The protein resides in the cytoplasm. The catalysed reaction is D-mannose 6-phosphate = D-fructose 6-phosphate. It participates in nucleotide-sugar biosynthesis; GDP-alpha-D-mannose biosynthesis; alpha-D-mannose 1-phosphate from D-fructose 6-phosphate: step 1/2. Its function is as follows. Involved in the synthesis of the GDP-mannose and dolichol-phosphate-mannose required for a number of critical mannosyl transfer reactions. The sequence is that of Probable mannose-6-phosphate isomerase (mpi) from Dictyostelium discoideum (Social amoeba).